A 150-amino-acid chain; its full sequence is Protein-arginine-phosphatase (150 aa).

The active-site Nucleophile is the cysteine 7. Residue 8 to 13 participates in substrate binding; sequence TGNTCR. Arginine 13 is an active-site residue. The active-site Proton donor/acceptor is aspartate 118.

It belongs to the low molecular weight phosphotyrosine protein phosphatase family.

The catalysed reaction is N(omega)-phospho-L-arginyl-[protein] + H2O = L-arginyl-[protein] + phosphate. Its activity is regulated as follows. Efficiently inhibited by Cu(2+) ion, Zn(2+) ion, sodium pyrophosphate and N-ethylmaleimide, while the addition of Mg(2+), Ca(2+) or Fe(3+) ions has minimal effect. Inhibited in a competitive manner by vanadate. Functionally, catalyzes the specific dephosphorylation of phosphoarginine residues in a large number of proteins. Counteracts the protein arginine kinase McsB in vivo. Can dephosphorylate CtsR-P; thus, can restore the DNA-binding ability of the CtsR repressor by reversing the McsB-mediated phosphorylation. Is the only active pArg phosphatase present in B.subtilis. Exhibits almost no activity against pSer, pThr, or pTyr peptides. Appears to play a role in B.subtilis stress resistance. Protein arginine phosphorylation has a physiologically important role and is involved in the regulation of many critical cellular processes, such as protein homeostasis, motility, competence, and stringent and stress responses, by regulating gene expression and protein activity. This is Protein-arginine-phosphatase (ywlE) from Bacillus subtilis (strain 168).